A 405-amino-acid polypeptide reads, in one-letter code: Protein NDRG4 (405 aa).

The tract at residues 352–405 is disordered; sequence AGAVPSASMTRLARSRTASLTSASSVDGARPRPCTQSESSDGIGQINHTMEVSC. Residues 361 to 376 show a composition bias toward low complexity; that stretch reads TRLARSRTASLTSASS. A compositionally biased stretch (polar residues) spans 385 to 405; that stretch reads CTQSESSDGIGQINHTMEVSC.

It belongs to the NDRG family.

It is found in the cytoplasm. It localises to the cytosol. Its function is as follows. Contributes to the maintenance of intracerebral BDNF levels within the normal range. May enhance growth factor-induced ERK1 and ERK2 phosphorylation. May attenuate growth factor-promoted ELK1 phosphorylation in a microtubule-dependent manner. This chain is Protein NDRG4, found in Xenopus tropicalis (Western clawed frog).